The primary structure comprises 237 residues: MPRIKICGIRTREEARWAAEAGADALGFIFAPHSKRYIQPETAREIILSLPPLISKVGVFAQASPEHVGRIVHECSLDTIQLHGNEDPRLYRHLSVTKIKAFSFPSAPAPGNSSAAAPDFSLVETSPSSSLPTSFRELPPASLHGILLDSSAGGRTGGTGIPLPWHTPEFQDFLHQVGDLGYPLILAGGLNPDNILEAIRLTRPYGVDVSSGVERNGRKDREKIQHFISQARKESPL.

This sequence belongs to the TrpF family.

It catalyses the reaction N-(5-phospho-beta-D-ribosyl)anthranilate = 1-(2-carboxyphenylamino)-1-deoxy-D-ribulose 5-phosphate. Its pathway is amino-acid biosynthesis; L-tryptophan biosynthesis; L-tryptophan from chorismate: step 3/5. This chain is N-(5'-phosphoribosyl)anthranilate isomerase, found in Desulfitobacterium hafniense (strain DSM 10664 / DCB-2).